A 168-amino-acid chain; its full sequence is uncharacterized protein (168 aa).

4Fe-4S ferredoxin-type domains follow at residues 48–78 (KIPKTVIEELCIGCEGCANVCPTKAIEMIPI) and 91–122 (KIPKINPEKCVYCLYCHDFCPVFSVFNEISPI). Positions 58, 61, 64, 68, 100, 103, 106, and 110 each coordinate [4Fe-4S] cluster.

This is an uncharacterized protein from Methanocaldococcus jannaschii (strain ATCC 43067 / DSM 2661 / JAL-1 / JCM 10045 / NBRC 100440) (Methanococcus jannaschii).